Reading from the N-terminus, the 148-residue chain is Deoxyuridine 5'-triphosphate nucleotidohydrolase (148 aa).

Substrate is bound by residues 68-70 (RSG), Asn-81, 85-87 (TID), and Lys-95.

It belongs to the dUTPase family. The cofactor is Mg(2+).

It carries out the reaction dUTP + H2O = dUMP + diphosphate + H(+). Its pathway is pyrimidine metabolism; dUMP biosynthesis; dUMP from dCTP (dUTP route): step 2/2. Its function is as follows. This enzyme is involved in nucleotide metabolism: it produces dUMP, the immediate precursor of thymidine nucleotides and it decreases the intracellular concentration of dUTP so that uracil cannot be incorporated into DNA. This is Deoxyuridine 5'-triphosphate nucleotidohydrolase from Rickettsia typhi (strain ATCC VR-144 / Wilmington).